The chain runs to 335 residues: Biotin synthase (335 aa).

Positions 46-274 constitute a Radical SAM core domain; it reads YNIQLASLFS…KSKIRLSAGR (229 aa). Residues C61, C65, and C68 each contribute to the [4Fe-4S] cluster site. [2Fe-2S] cluster-binding residues include C105, C137, C197, and R269.

The protein belongs to the radical SAM superfamily. Biotin synthase family. As to quaternary structure, homodimer. [4Fe-4S] cluster is required as a cofactor. The cofactor is [2Fe-2S] cluster.

The catalysed reaction is (4R,5S)-dethiobiotin + (sulfur carrier)-SH + 2 reduced [2Fe-2S]-[ferredoxin] + 2 S-adenosyl-L-methionine = (sulfur carrier)-H + biotin + 2 5'-deoxyadenosine + 2 L-methionine + 2 oxidized [2Fe-2S]-[ferredoxin]. It participates in cofactor biosynthesis; biotin biosynthesis; biotin from 7,8-diaminononanoate: step 2/2. Its function is as follows. Catalyzes the conversion of dethiobiotin (DTB) to biotin by the insertion of a sulfur atom into dethiobiotin via a radical-based mechanism. This Prochlorococcus marinus (strain MIT 9312) protein is Biotin synthase.